The following is a 481-amino-acid chain: 2-succinylbenzoate--CoA ligase (481 aa).

The protein belongs to the ATP-dependent AMP-binding enzyme family. MenE subfamily.

The enzyme catalyses 2-succinylbenzoate + ATP + CoA = 2-succinylbenzoyl-CoA + AMP + diphosphate. It functions in the pathway quinol/quinone metabolism; 1,4-dihydroxy-2-naphthoate biosynthesis; 1,4-dihydroxy-2-naphthoate from chorismate: step 5/7. The protein operates within quinol/quinone metabolism; menaquinone biosynthesis. Functionally, converts 2-succinylbenzoate (OSB) to 2-succinylbenzoyl-CoA (OSB-CoA). In Bacillus cereus (strain ATCC 10987 / NRS 248), this protein is 2-succinylbenzoate--CoA ligase.